A 512-amino-acid polypeptide reads, in one-letter code: ATP synthase subunit alpha (512 aa).

Residue 169-176 (GDRKTGKT) participates in ATP binding.

The protein belongs to the ATPase alpha/beta chains family. F-type ATPases have 2 components, CF(1) - the catalytic core - and CF(0) - the membrane proton channel. CF(1) has five subunits: alpha(3), beta(3), gamma(1), delta(1), epsilon(1). CF(0) has three main subunits: a(1), b(2) and c(9-12). The alpha and beta chains form an alternating ring which encloses part of the gamma chain. CF(1) is attached to CF(0) by a central stalk formed by the gamma and epsilon chains, while a peripheral stalk is formed by the delta and b chains.

The protein localises to the cell membrane. The enzyme catalyses ATP + H2O + 4 H(+)(in) = ADP + phosphate + 5 H(+)(out). Functionally, produces ATP from ADP in the presence of a proton gradient across the membrane. The alpha chain is a regulatory subunit. This is ATP synthase subunit alpha from Limosilactobacillus fermentum (strain NBRC 3956 / LMG 18251) (Lactobacillus fermentum).